The sequence spans 272 residues: uncharacterized protein (272 aa).

Active-site residues include D71 and E163.

This sequence belongs to the glycosyl hydrolase 25 family.

This is an uncharacterized protein from Escherichia coli O6:H1 (strain CFT073 / ATCC 700928 / UPEC).